The following is a 100-amino-acid chain: Aspartyl/glutamyl-tRNA(Asn/Gln) amidotransferase subunit C (100 aa).

This sequence belongs to the GatC family. As to quaternary structure, heterotrimer of A, B and C subunits.

It carries out the reaction L-glutamyl-tRNA(Gln) + L-glutamine + ATP + H2O = L-glutaminyl-tRNA(Gln) + L-glutamate + ADP + phosphate + H(+). The catalysed reaction is L-aspartyl-tRNA(Asn) + L-glutamine + ATP + H2O = L-asparaginyl-tRNA(Asn) + L-glutamate + ADP + phosphate + 2 H(+). Allows the formation of correctly charged Asn-tRNA(Asn) or Gln-tRNA(Gln) through the transamidation of misacylated Asp-tRNA(Asn) or Glu-tRNA(Gln) in organisms which lack either or both of asparaginyl-tRNA or glutaminyl-tRNA synthetases. The reaction takes place in the presence of glutamine and ATP through an activated phospho-Asp-tRNA(Asn) or phospho-Glu-tRNA(Gln). The sequence is that of Aspartyl/glutamyl-tRNA(Asn/Gln) amidotransferase subunit C from Rickettsia rickettsii (strain Sheila Smith).